We begin with the raw amino-acid sequence, 338 residues long: DNA-directed RNA polymerase I subunit RPA43 (338 aa).

The tract at residues 209–338 is disordered; the sequence is EVSEEVTENG…PKRKGKSNFL (130 aa). A phosphoserine mark is found at Ser-242, Ser-304, and Ser-316. Thr-322 carries the post-translational modification Phosphothreonine. Residue Ser-328 is modified to Phosphoserine. Over residues 328–338 the composition is skewed to basic residues; sequence SPKRKGKSNFL.

The protein belongs to the eukaryotic RPA43 RNA polymerase subunit family. Component of the RNA polymerase I (Pol I) complex consisting of 13 subunits: a ten-subunit catalytic core composed of POLR1A/RPA1, POLR1B/RPA2, POLR1C/RPAC1, POLR1D/RPAC2, POLR1H/RPA12, POLR2E/RPABC1, POLR2F/RPABC2, POLR2H/RPABC3, POLR2K/RPABC4 and POLR2L/RPABC5; a mobile stalk subunit POLR1F/RPA43 protruding from the core and additional subunits homologous to general transcription factors POLR1E/RPA49 and POLR1G/RPA34. Interacts with RRN3/TIF-IA. Widely expressed. Expressed in all fetal and adult tissues tested, with highest expression in fetal lung, liver, and kidney, and low expression in all adult tissues.

Its subcellular location is the nucleus. It is found in the nucleolus. Its function is as follows. Component of RNA polymerase I (Pol I), a DNA-dependent RNA polymerase which synthesizes ribosomal RNA precursors using the four ribonucleoside triphosphates as substrates. Through its association with RRN3/TIF-IA may be involved in recruitment of Pol I to rDNA promoters. The protein is DNA-directed RNA polymerase I subunit RPA43 of Homo sapiens (Human).